The chain runs to 304 residues: Probable 5-dehydro-4-deoxyglucarate dehydratase (304 aa).

It belongs to the DapA family.

The catalysed reaction is 5-dehydro-4-deoxy-D-glucarate + H(+) = 2,5-dioxopentanoate + CO2 + H2O. It functions in the pathway carbohydrate acid metabolism; D-glucarate degradation; 2,5-dioxopentanoate from D-glucarate: step 2/2. The chain is Probable 5-dehydro-4-deoxyglucarate dehydratase from Rhodococcus opacus (strain B4).